The primary structure comprises 1053 residues: Sal-like protein 4 (1053 aa).

The segment at 1–62 (MSRRKQAKPQ…DEVASEDEAT (62 aa)) is disordered. Residues 20–46 (EQQPQQQTPEFADAAPAAPAAGELGAP) show a composition bias toward low complexity. S57 is subject to Phosphoserine. The C2H2-type 1; atypical zinc finger occupies 72 to 94 (HVCEKCCAEFFSISEFLEHKKNC). The disordered stretch occupies residues 116–149 (SGAVLSHQPTSPGSKDCHRENGGSSEDMKEKPDA). Over residues 130–149 (KDCHRENGGSSEDMKEKPDA) the composition is skewed to basic and acidic residues. Residue K156 forms a Glycyl lysine isopeptide (Lys-Gly) (interchain with G-Cter in SUMO1); alternate linkage. Residue K156 forms a Glycyl lysine isopeptide (Lys-Gly) (interchain with G-Cter in SUMO2); alternate linkage. Glycyl lysine isopeptide (Lys-Gly) (interchain with G-Cter in SUMO2) cross-links involve residues K175, K190, and K290. Residue S307 is modified to Phosphoserine. K316 participates in a covalent cross-link: Glycyl lysine isopeptide (Lys-Gly) (interchain with G-Cter in SUMO1); alternate. Residue K316 forms a Glycyl lysine isopeptide (Lys-Gly) (interchain with G-Cter in SUMO2); alternate linkage. Residue K372 forms a Glycyl lysine isopeptide (Lys-Gly) (interchain with G-Cter in SUMO2) linkage. A Glycyl lysine isopeptide (Lys-Gly) (interchain with G-Cter in SUMO1); alternate cross-link involves residue K374. K374 is covalently cross-linked (Glycyl lysine isopeptide (Lys-Gly) (interchain with G-Cter in SUMO2); alternate). 2 consecutive C2H2-type zinc fingers follow at residues 382–404 (HKCK…LRSH) and 410–432 (FVCS…FHRH). K436 participates in a covalent cross-link: Glycyl lysine isopeptide (Lys-Gly) (interchain with G-Cter in SUMO2). Positions 483-496 (VGLPQNLSSGTNPK) are enriched in polar residues. The disordered stretch occupies residues 483–546 (VGLPQNLSSG…QGSGTPEPGS (64 aa)). T541 is subject to Phosphothreonine. Residue K550 forms a Glycyl lysine isopeptide (Lys-Gly) (interchain with G-Cter in SUMO2) linkage. 2 C2H2-type zinc fingers span residues 566–588 (NECL…YRTH) and 594–616 (FQCK…LGVH). Residues K597 and K623 each participate in a glycyl lysine isopeptide (Lys-Gly) (interchain with G-Cter in SUMO2) cross-link. Residues 626–648 (HSCPICQKKFTNAVMLQQHIRMH) form a C2H2-type 6 zinc finger. 3 disordered regions span residues 694–714 (EEVS…PLPS), 736–776 (VGPA…QSRS), and 788–828 (LSPA…LPST). The span at 698-708 (SQEAPSSSSKV) shows a compositional bias: low complexity. Polar residues-rich tracts occupy residues 743–776 (LQRQ…QSRS) and 788–797 (LSPANSQAES). S776 and S789 each carry phosphoserine. Basic and acidic residues predominate over residues 810–821 (ESSENSRTEMEG). K838 is covalently cross-linked (Glycyl lysine isopeptide (Lys-Gly) (interchain with G-Cter in SUMO1); alternate). K838 is covalently cross-linked (Glycyl lysine isopeptide (Lys-Gly) (interchain with G-Cter in SUMO2); alternate). Position 852 is a phosphoserine (S852). The segment at 870–892 (HGCTRCGKNFSSASALQIHERTH) adopts a C2H2-type 7 zinc-finger fold. K896 is covalently cross-linked (Glycyl lysine isopeptide (Lys-Gly) (interchain with G-Cter in SUMO2)). The C2H2-type 8 zinc-finger motif lies at 898–920 (FVCNICGRAFTTKGNLKVHYMTH). Glycyl lysine isopeptide (Lys-Gly) (interchain with G-Cter in SUMO2) cross-links involve residues K932 and K947. Positions 1018 to 1039 (GSQSGISADVEKPSATDGVPKH) are disordered. The residue at position 1019 (S1019) is a Phosphoserine.

Belongs to the sal C2H2-type zinc-finger protein family. Interacts with POU5F1/OCT4. Interacts with NANOG. Interacts with BEND3. Interacts with NSD2 (via PHD-type zinc fingers 1, 2 and 3). Interacts with NRBP1. Isoform SALL4B exists primarily as a ubiquitinated form. Post-translationally, sumoylation with both SUMO1 and SUMO2 regulates the stability, subcellular localization, transcriptional activity, and may reduce interaction with POU5F1/OCT4. Expressed in testis. Constitutively expressed in acute myeloid leukemia (AML).

The protein localises to the cytoplasm. It is found in the nucleus. Transcription factor with a key role in the maintenance and self-renewal of embryonic and hematopoietic stem cells. The protein is Sal-like protein 4 (SALL4) of Homo sapiens (Human).